An 83-amino-acid chain; its full sequence is Small ribosomal subunit protein bS16 (83 aa).

This sequence belongs to the bacterial ribosomal protein bS16 family.

In Chromobacterium violaceum (strain ATCC 12472 / DSM 30191 / JCM 1249 / CCUG 213 / NBRC 12614 / NCIMB 9131 / NCTC 9757 / MK), this protein is Small ribosomal subunit protein bS16.